Consider the following 314-residue polypeptide: 4-hydroxy-3-methylbut-2-enyl diphosphate reductase (314 aa).

Cys12 contacts [4Fe-4S] cluster. 2 residues coordinate (2E)-4-hydroxy-3-methylbut-2-enyl diphosphate: His43 and His81. Dimethylallyl diphosphate is bound by residues His43 and His81. 2 residues coordinate isopentenyl diphosphate: His43 and His81. A [4Fe-4S] cluster-binding site is contributed by Cys103. Residue His131 participates in (2E)-4-hydroxy-3-methylbut-2-enyl diphosphate binding. Residue His131 participates in dimethylallyl diphosphate binding. His131 is an isopentenyl diphosphate binding site. The active-site Proton donor is Glu133. Thr170 lines the (2E)-4-hydroxy-3-methylbut-2-enyl diphosphate pocket. Cys198 lines the [4Fe-4S] cluster pocket. The (2E)-4-hydroxy-3-methylbut-2-enyl diphosphate site is built by Ser226, Asn228, and Ser271. The dimethylallyl diphosphate site is built by Ser226, Asn228, and Ser271. Isopentenyl diphosphate contacts are provided by Ser226, Asn228, and Ser271.

This sequence belongs to the IspH family. The cofactor is [4Fe-4S] cluster.

The catalysed reaction is isopentenyl diphosphate + 2 oxidized [2Fe-2S]-[ferredoxin] + H2O = (2E)-4-hydroxy-3-methylbut-2-enyl diphosphate + 2 reduced [2Fe-2S]-[ferredoxin] + 2 H(+). The enzyme catalyses dimethylallyl diphosphate + 2 oxidized [2Fe-2S]-[ferredoxin] + H2O = (2E)-4-hydroxy-3-methylbut-2-enyl diphosphate + 2 reduced [2Fe-2S]-[ferredoxin] + 2 H(+). It participates in isoprenoid biosynthesis; dimethylallyl diphosphate biosynthesis; dimethylallyl diphosphate from (2E)-4-hydroxy-3-methylbutenyl diphosphate: step 1/1. Its pathway is isoprenoid biosynthesis; isopentenyl diphosphate biosynthesis via DXP pathway; isopentenyl diphosphate from 1-deoxy-D-xylulose 5-phosphate: step 6/6. Catalyzes the conversion of 1-hydroxy-2-methyl-2-(E)-butenyl 4-diphosphate (HMBPP) into a mixture of isopentenyl diphosphate (IPP) and dimethylallyl diphosphate (DMAPP). Acts in the terminal step of the DOXP/MEP pathway for isoprenoid precursor biosynthesis. The protein is 4-hydroxy-3-methylbut-2-enyl diphosphate reductase of Shouchella clausii (strain KSM-K16) (Alkalihalobacillus clausii).